Here is a 475-residue protein sequence, read N- to C-terminus: Ankyrin repeat, SAM and basic leucine zipper domain-containing protein 1 (475 aa).

A disordered region spans residues 1 to 24; the sequence is MAAGPLRGLAVAGGGESSESEDDG. Phosphoserine occurs at positions 17, 18, and 20. 6 ANK repeats span residues 45–74, 78–107, 110–144, 148–177, 181–210, and 214–243; these read ERQE…SVDT, YGWT…NASF, DKQT…DPNV, RLMT…EVNT, NGYT…NKMI, and DGKT…PLEG. The 63-residue stretch at 272–334 folds into the SAM domain; it reads SYTAFGDLEI…KIMAALKELE (63 aa).

Interacts with DDX4, PIWIL1, RANBP9 and TDRD1.

The protein resides in the cytoplasm. Functionally, plays a central role during spermatogenesis by repressing transposable elements and preventing their mobilization, which is essential for the germline integrity. Acts via the piRNA metabolic process, which mediates the repression of transposable elements during meiosis by forming complexes composed of piRNAs and Piwi proteins and governs the methylation and subsequent repression of transposons. Its association with pi-bodies suggests a participation in the primary piRNAs metabolic process. Required prior to the pachytene stage to facilitate the production of multiple types of piRNAs, including those associated with repeats involved in the regulation of retrotransposons. May act by mediating protein-protein interactions during germ cell maturation. The chain is Ankyrin repeat, SAM and basic leucine zipper domain-containing protein 1 (ASZ1) from Ovis aries (Sheep).